A 118-amino-acid chain; its full sequence is Putative pterin-4-alpha-carbinolamine dehydratase (118 aa).

This sequence belongs to the pterin-4-alpha-carbinolamine dehydratase family.

The catalysed reaction is (4aS,6R)-4a-hydroxy-L-erythro-5,6,7,8-tetrahydrobiopterin = (6R)-L-erythro-6,7-dihydrobiopterin + H2O. This chain is Putative pterin-4-alpha-carbinolamine dehydratase, found in Xanthomonas euvesicatoria pv. vesicatoria (strain 85-10) (Xanthomonas campestris pv. vesicatoria).